Reading from the N-terminus, the 140-residue chain is Small ribosomal subunit protein uS19 (140 aa).

This sequence belongs to the universal ribosomal protein uS19 family.

Its function is as follows. Protein S19 forms a complex with S13 that binds strongly to the 16S ribosomal RNA. This chain is Small ribosomal subunit protein uS19, found in Natronomonas pharaonis (strain ATCC 35678 / DSM 2160 / CIP 103997 / JCM 8858 / NBRC 14720 / NCIMB 2260 / Gabara) (Halobacterium pharaonis).